The sequence spans 213 residues: Orotate phosphoribosyltransferase (213 aa).

Position 26 (Lys26) interacts with 5-phospho-alpha-D-ribose 1-diphosphate. Residue 34-35 (FF) coordinates orotate. 5-phospho-alpha-D-ribose 1-diphosphate is bound by residues 72–73 (YK), Arg99, Lys100, Lys103, His105, and 124–132 (DDVITAGTA). Positions 128 and 156 each coordinate orotate.

It belongs to the purine/pyrimidine phosphoribosyltransferase family. PyrE subfamily. Homodimer. Requires Mg(2+) as cofactor.

It catalyses the reaction orotidine 5'-phosphate + diphosphate = orotate + 5-phospho-alpha-D-ribose 1-diphosphate. Its pathway is pyrimidine metabolism; UMP biosynthesis via de novo pathway; UMP from orotate: step 1/2. In terms of biological role, catalyzes the transfer of a ribosyl phosphate group from 5-phosphoribose 1-diphosphate to orotate, leading to the formation of orotidine monophosphate (OMP). In Haemophilus influenzae (strain ATCC 51907 / DSM 11121 / KW20 / Rd), this protein is Orotate phosphoribosyltransferase.